We begin with the raw amino-acid sequence, 72 residues long: Sec-independent protein translocase protein TatA (72 aa).

A helical transmembrane segment spans residues 1–21 (MAGLSIWHVVIFAIVVILLFG). The segment at 47 to 72 (DEAASLNSPRTIDAQVKTSESTSVKS) is disordered. The span at 51–72 (SLNSPRTIDAQVKTSESTSVKS) shows a compositional bias: polar residues.

The protein belongs to the TatA/E family. As to quaternary structure, the Tat system comprises two distinct complexes: a TatABC complex, containing multiple copies of TatA, TatB and TatC subunits, and a separate TatA complex, containing only TatA subunits. Substrates initially bind to the TatABC complex, which probably triggers association of the separate TatA complex to form the active translocon.

The protein localises to the cell inner membrane. In terms of biological role, part of the twin-arginine translocation (Tat) system that transports large folded proteins containing a characteristic twin-arginine motif in their signal peptide across membranes. TatA could form the protein-conducting channel of the Tat system. This Acinetobacter baumannii (strain AB307-0294) protein is Sec-independent protein translocase protein TatA.